Here is a 183-residue protein sequence, read N- to C-terminus: ATP-dependent protease subunit HslV (183 aa).

Thr13 is a catalytic residue. Positions 168, 171, and 174 each coordinate Na(+).

The protein belongs to the peptidase T1B family. HslV subfamily. A double ring-shaped homohexamer of HslV is capped on each side by a ring-shaped HslU homohexamer. The assembly of the HslU/HslV complex is dependent on binding of ATP.

The protein resides in the cytoplasm. The enzyme catalyses ATP-dependent cleavage of peptide bonds with broad specificity.. With respect to regulation, allosterically activated by HslU binding. In terms of biological role, protease subunit of a proteasome-like degradation complex believed to be a general protein degrading machinery. The sequence is that of ATP-dependent protease subunit HslV from Stenotrophomonas maltophilia (strain R551-3).